A 386-amino-acid polypeptide reads, in one-letter code: Tumor necrosis factor receptor superfamily member 10D (386 aa).

Disordered stretches follow at residues 1-25 (MGLW…ARTA) and 62-90 (DEVP…SHRS). A signal peptide spans 1–55 (MGLWGQSVPTASSARAGRYPGARTASGTRPWLLDPKILKFVVFIVAVLLPVRVDS). Topologically, residues 56-211 (ATIPRQDEVP…ILGMLASPYH (156 aa)) are extracellular. TNFR-Cys repeat units lie at residues 58–97 (IPRQ…GACN), 98–139 (PCTE…DTVC), and 140–180 (QCEK…DIKC). Residues 64–75 (VPQQTVAPQQQR) are compositionally biased toward polar residues. 7 disulfides stabilise this stretch: cysteine 83–cysteine 96, cysteine 99–cysteine 115, cysteine 118–cysteine 131, cysteine 121–cysteine 139, cysteine 141–cysteine 155, cysteine 158–cysteine 172, and cysteine 162–cysteine 180. N-linked (GlcNAc...) asparagine glycosylation occurs at asparagine 127. An N-linked (GlcNAc...) asparagine glycan is attached at asparagine 182. The chain crosses the membrane as a helical span at residues 212 to 232 (YLIIIVVLVIILAVVVVGFSC). Over 233–386 (RKKFISYLKG…DEAGSATSCL (154 aa)) the chain is Cytoplasmic. The 27-residue stretch at 340-366 (SADISTLLDASATLEEGHAKETIQDQL) folds into the Death; truncated domain.

In terms of tissue distribution, widely expressed, in particular in fetal kidney, lung and liver, and in adult testis and liver. Also expressed in peripheral blood leukocytes, colon and small intestine, ovary, prostate, thymus, spleen, pancreas, kidney, lung, placenta and heart.

It localises to the membrane. Its function is as follows. Receptor for the cytotoxic ligand TRAIL. Contains a truncated death domain and hence is not capable of inducing apoptosis but protects against TRAIL-mediated apoptosis. Reports are contradictory with regards to its ability to induce the NF-kappa-B pathway. According to PubMed:9382840, it cannot but according to PubMed:9430226, it can induce the NF-kappa-B pathway. In Homo sapiens (Human), this protein is Tumor necrosis factor receptor superfamily member 10D.